The following is an 881-amino-acid chain: DNA mismatch repair protein MutS (881 aa).

626–633 (GPNMAGKS) lines the ATP pocket.

It belongs to the DNA mismatch repair MutS family.

This protein is involved in the repair of mismatches in DNA. It is possible that it carries out the mismatch recognition step. This protein has a weak ATPase activity. This chain is DNA mismatch repair protein MutS, found in Desulfosudis oleivorans (strain DSM 6200 / JCM 39069 / Hxd3) (Desulfococcus oleovorans).